The following is a 348-amino-acid chain: MVSSPMSWSKRLDHLLNGGVFSHAEATELMEAWLAEALTPVQTGAFLAALRSRGVDGTELGAMAAVLRQASPLPCERPTLGLVDTCGTGGDGADTFNISTAVAFTAAACGATVAKHGNRSASGKVGSADVLEGLGLHLKAPAAQVVSALPATRVTFLFAPAWHPALVNLAPLRKSLGVRTVFNLLGPLVNPLRPDGQVLGVATDDLLDPMAEALRSLGQDRAVVVHGSGGLDEASLAGPNPVRILEKGQVRSEWIAPEDLGLQQAPLDALRGGDLVRNQTILEELLSGRGSQAQNEVVAFNTALVLWVAGVESDFKQGAQKALAALSQGSPWSRLEQLRAALSPAKEE.

5-phospho-alpha-D-ribose 1-diphosphate is bound by residues G87, 90–91, T95, 97–100, 115–123, and S127; these read GD, NIST, and KHGNRSASG. G87 contacts anthranilate. S99 is a Mg(2+) binding site. N118 serves as a coordination point for anthranilate. R173 is an anthranilate binding site. Mg(2+)-binding residues include D232 and E233.

Belongs to the anthranilate phosphoribosyltransferase family. In terms of assembly, homodimer. It depends on Mg(2+) as a cofactor.

The enzyme catalyses N-(5-phospho-beta-D-ribosyl)anthranilate + diphosphate = 5-phospho-alpha-D-ribose 1-diphosphate + anthranilate. Its pathway is amino-acid biosynthesis; L-tryptophan biosynthesis; L-tryptophan from chorismate: step 2/5. Catalyzes the transfer of the phosphoribosyl group of 5-phosphorylribose-1-pyrophosphate (PRPP) to anthranilate to yield N-(5'-phosphoribosyl)-anthranilate (PRA). In Synechococcus sp. (strain WH7803), this protein is Anthranilate phosphoribosyltransferase.